Here is a 999-residue protein sequence, read N- to C-terminus: Sarcoplasmic/endoplasmic reticulum calcium ATPase 3 (999 aa).

At methionine 1 the chain carries N-acetylmethionine. Over 1–48 the chain is Cytoplasmic; the sequence is MEEAHLLSAADVLRRFSVTAEGGLSLEQVTDARERYGPNELPTEEGKS. A Phosphoserine modification is found at serine 17. Threonine 19 carries the post-translational modification Phosphothreonine. Residue serine 25 is modified to Phosphoserine. A helical membrane pass occupies residues 49 to 69; the sequence is LWELVVEQFEDLLVRILLLAA. Over 70 to 89 the chain is Lumenal; sequence LVSFVLAWFEEGEETTTAFV. Residues 90–110 form a helical membrane-spanning segment; that stretch reads EPLVIMLILVANAIVGVWQER. Residues 111-253 are Cytoplasmic-facing; it reads NAESAIEALK…PERTPLQRKL (143 aa). The helical transmembrane segment at 254-273 threads the bilayer; that stretch reads DEFGRQLSHAISVICVAVWV. Residues 274–295 lie on the Lumenal side of the membrane; sequence INIGHFADPAHGGSWLRGAVYY. The chain crosses the membrane as a helical span at residues 296–313; sequence FKIAVALAVAAIPEGLPA. Positions 304, 305, 307, and 309 each coordinate Ca(2+). Over 314–757 the chain is Cytoplasmic; that stretch reads VITTCLALGT…EEGRAIYNNM (444 aa). The active-site 4-aspartylphosphate intermediate is aspartate 351. Aspartate 351 and threonine 353 together coordinate Mg(2+). Threonine 353 provides a ligand contact to ATP. The segment at 370 to 400 is interaction with phospholamban 1; sequence AEAEAGTCRLHEFTISGTTYTPEGEVRQGEQ. At threonine 415 the chain carries Phosphothreonine. Glutamate 442, arginine 489, lysine 515, arginine 560, threonine 625, glycine 626, and aspartate 627 together coordinate ATP. Residue serine 662 is modified to Phosphoserine. Residues arginine 678 and lysine 684 each contribute to the ATP site. Aspartate 703 serves as a coordination point for Mg(2+). Asparagine 706 contributes to the ATP binding site. A helical transmembrane segment spans residues 758-777; that stretch reads KQFIRYLISSNVGEVVCIFL. The Ca(2+) site is built by asparagine 768 and glutamate 771. Residues 778–787 lie on the Lumenal side of the membrane; that stretch reads TAILGLPEAL. The helical transmembrane segment at 788 to 808 threads the bilayer; the sequence is IPVQLLWVNLVTDGLPATALG. The interaction with phospholamban 2 stretch occupies residues 788-808; that stretch reads IPVQLLWVNLVTDGLPATALG. Residues asparagine 796, threonine 799, and aspartate 800 each coordinate Ca(2+). The Cytoplasmic portion of the chain corresponds to 809–828; sequence FNPPDLDIMEKPPRNPREAL. The helical transmembrane segment at 829–851 threads the bilayer; that stretch reads ISGWLFFRYLAIGVYVGLATVAA. Topologically, residues 852–897 are lumenal; that stretch reads ATWWFLYDTEGPQVTFYQLRNFLKCSEDNPLFAGIDCKVFESRFPT. Residues 898-917 traverse the membrane as a helical segment; sequence TMALSVLVTIEMCNALNSVS. Glutamate 908 lines the Ca(2+) pocket. Residues 918–930 lie on the Cytoplasmic side of the membrane; sequence ENQSLLRMPPWLN. The chain crosses the membrane as a helical span at residues 931–949; sequence PWLLGAVVMSMALHFLILL. The Lumenal portion of the chain corresponds to 950–964; sequence VPPLPLIFQVTPLSG. The helical transmembrane segment at 965 to 985 threads the bilayer; it reads RQWGVVLQMSLPVILLDEALK. Residues 986 to 999 lie on the Cytoplasmic side of the membrane; sequence YLSRNHMDEKKDLK.

The protein belongs to the cation transport ATPase (P-type) (TC 3.A.3) family. Type IIA subfamily. Interacts with sarcolipin (SLN). Interacts with phospholamban (PLN). Interacts with myoregulin (MRLN). Interacts with DWORF. Interacts with VMP1. Interacts with TUNAR; the interaction occurs at low levels in low glucose conditions and is increased by high glucose levels. It depends on Mg(2+) as a cofactor.

The protein localises to the endoplasmic reticulum membrane. Its subcellular location is the sarcoplasmic reticulum membrane. It catalyses the reaction Ca(2+)(in) + ATP + H2O = Ca(2+)(out) + ADP + phosphate + H(+). Its activity is regulated as follows. Inhibited by sarcolipin (SLN), phospholamban (PLN) and myoregulin (MRLN). Enhanced by DWORF; DWORF increases activity by displacing sarcolipin (SLN), phospholamban (PLN) and myoregulin (MRLN). In terms of biological role, this magnesium-dependent enzyme catalyzes the hydrolysis of ATP coupled with the transport of calcium. Transports calcium ions from the cytosol into the sarcoplasmic/endoplasmic reticulum lumen. Contributes to calcium sequestration involved in muscular excitation/contraction. This chain is Sarcoplasmic/endoplasmic reticulum calcium ATPase 3 (Atp2a3), found in Mus musculus (Mouse).